A 684-amino-acid polypeptide reads, in one-letter code: Glycine--tRNA ligase beta subunit (684 aa).

This sequence belongs to the class-II aminoacyl-tRNA synthetase family. In terms of assembly, tetramer of two alpha and two beta subunits.

The protein resides in the cytoplasm. The enzyme catalyses tRNA(Gly) + glycine + ATP = glycyl-tRNA(Gly) + AMP + diphosphate. The polypeptide is Glycine--tRNA ligase beta subunit (Pseudomonas aeruginosa (strain ATCC 15692 / DSM 22644 / CIP 104116 / JCM 14847 / LMG 12228 / 1C / PRS 101 / PAO1)).